Here is a 90-residue protein sequence, read N- to C-terminus: Small ribosomal subunit protein uS15c (90 aa).

Component of the chloroplast small ribosomal subunit (SSU). Mature 70S chloroplast ribosomes of higher plants consist of a small (30S) and a large (50S) subunit. The 30S small subunit contains 1 molecule of ribosomal RNA (16S rRNA) and 24 different proteins. The 50S large subunit contains 3 rRNA molecules (23S, 5S and 4.5S rRNA) and 33 different proteins.

Its subcellular location is the plastid. The protein localises to the chloroplast. Functionally, component of the chloroplast ribosome (chloro-ribosome), a dedicated translation machinery responsible for the synthesis of chloroplast genome-encoded proteins, including proteins of the transcription and translation machinery and components of the photosynthetic apparatus. This Spinacia oleracea (Spinach) protein is Small ribosomal subunit protein uS15c (rps15).